The primary structure comprises 456 residues: Phosphoglucomutase/phosphomannomutase (456 aa).

The active-site Phosphoserine intermediate is the Ser101. Mg(2+) contacts are provided by Ser101, Asp243, Asp245, and Asp247. Ser101 bears the Phosphoserine; by autocatalysis mark.

This sequence belongs to the phosphohexose mutase family. Homotetramer. It depends on Mg(2+) as a cofactor. In terms of processing, activated by phosphorylation.

It carries out the reaction alpha-D-glucose 1-phosphate = alpha-D-glucose 6-phosphate. The catalysed reaction is alpha-D-mannose 1-phosphate = D-mannose 6-phosphate. Catalyzes the interconversion of glucose 1-phosphate and glucose 6-phosphate, and the interconversion of mannose 1-phosphate and mannose 6-phosphate. Also displays low activity with deoxyribose 1-phosphate and glucosamine 1-phosphate. This Thermococcus kodakarensis (strain ATCC BAA-918 / JCM 12380 / KOD1) (Pyrococcus kodakaraensis (strain KOD1)) protein is Phosphoglucomutase/phosphomannomutase.